The sequence spans 254 residues: 3-deoxy-manno-octulosonate cytidylyltransferase (254 aa).

The protein belongs to the KdsB family.

It is found in the cytoplasm. It carries out the reaction 3-deoxy-alpha-D-manno-oct-2-ulosonate + CTP = CMP-3-deoxy-beta-D-manno-octulosonate + diphosphate. It functions in the pathway nucleotide-sugar biosynthesis; CMP-3-deoxy-D-manno-octulosonate biosynthesis; CMP-3-deoxy-D-manno-octulosonate from 3-deoxy-D-manno-octulosonate and CTP: step 1/1. Its pathway is bacterial outer membrane biogenesis; lipopolysaccharide biosynthesis. Activates KDO (a required 8-carbon sugar) for incorporation into bacterial lipopolysaccharide in Gram-negative bacteria. The polypeptide is 3-deoxy-manno-octulosonate cytidylyltransferase (Pseudomonas putida (strain GB-1)).